The primary structure comprises 228 residues: 30 kDa heat shock protein (228 aa).

3 disordered regions span residues 34 to 53 (EVQG…PTRT), 117 to 136 (KGEP…DVDE), and 144 to 174 (TATG…APAE). The 180-residue stretch at 49-228 (QPTRTFSPKF…KHETIRIAIN (180 aa)) folds into the sHSP domain. Low complexity predominate over residues 144–158 (TATGANNQNNQQVAQ).

It belongs to the small heat shock protein (HSP20) family.

The protein resides in the cytoplasm. This is 30 kDa heat shock protein (hsp30) from Neurospora crassa (strain ATCC 24698 / 74-OR23-1A / CBS 708.71 / DSM 1257 / FGSC 987).